We begin with the raw amino-acid sequence, 316 residues long: Homoserine kinase (316 aa).

Residue 96-106 (PHGRGLGSSGA) participates in ATP binding.

Belongs to the GHMP kinase family. Homoserine kinase subfamily.

Its subcellular location is the cytoplasm. The enzyme catalyses L-homoserine + ATP = O-phospho-L-homoserine + ADP + H(+). It participates in amino-acid biosynthesis; L-threonine biosynthesis; L-threonine from L-aspartate: step 4/5. Its function is as follows. Catalyzes the ATP-dependent phosphorylation of L-homoserine to L-homoserine phosphate. This chain is Homoserine kinase, found in Clavibacter michiganensis subsp. michiganensis (strain NCPPB 382).